Reading from the N-terminus, the 197-residue chain is Outer-membrane lipoprotein LolB (197 aa).

Positions 1 to 20 (MNRSRRLALFCLGAPLLLQA) are cleaved as a signal peptide. Cys-21 carries the N-palmitoyl cysteine lipid modification. The S-diacylglycerol cysteine moiety is linked to residue Cys-21.

It belongs to the LolB family. Monomer.

The protein localises to the cell outer membrane. Plays a critical role in the incorporation of lipoproteins in the outer membrane after they are released by the LolA protein. This Cupriavidus necator (strain ATCC 17699 / DSM 428 / KCTC 22496 / NCIMB 10442 / H16 / Stanier 337) (Ralstonia eutropha) protein is Outer-membrane lipoprotein LolB.